Consider the following 532-residue polypeptide: Spore germination protein 270-11 (532 aa).

2 disordered regions span residues 113-225 and 328-436; these read TTTS…GYGS and LSPT…TTGT. Residues 329–426 are compositionally biased toward low complexity; sequence SPTCSDSSSP…GSGSSSETQP (98 aa). 13 tandem repeats follow at residues 339-342, 343-346, 347-350, 351-354, 355-358, 359-362, 363-366, 367-370, 371-374, 375-378, 397-400, 401-404, and 405-408. Positions 339–378 are 10 X 4 AA tandem repeats of T-[EP]-T-[EP]; it reads TPTPTETPTETPTETPTETPTETPTETPTETPTETETPTP. The tract at residues 397-408 is 3 X 4 AA tandem repeats of T-[EP]-T-[PD]; that stretch reads TPTPTETDTPTP.

The polypeptide is Spore germination protein 270-11 (celB) (Dictyostelium discoideum (Social amoeba)).